Consider the following 816-residue polypeptide: Sucrose synthase 1 (816 aa).

Residues 280-757 are GT-B glycosyltransferase; sequence MVFNVVIMSP…GLQRIEEKYT (478 aa).

This sequence belongs to the glycosyltransferase 1 family. Plant sucrose synthase subfamily. Homotetramer or heterotetramer with SUS2. Expressed in root phloem and leaf mesophyll. Expressed in phloem tissues and aleurone layers of seeds and at lower levels in the pericarp and endosperm cells (at protein level). Predominantly expressed in elongating tissues including roots, developing leaves and internodes.

It carries out the reaction an NDP-alpha-D-glucose + D-fructose = a ribonucleoside 5'-diphosphate + sucrose + H(+). In terms of biological role, sucrose-cleaving enzyme that provides UDP-glucose and fructose for various metabolic pathways. This is Sucrose synthase 1 (SUS1) from Oryza sativa subsp. japonica (Rice).